The sequence spans 484 residues: Chromosomal replication initiator protein DnaA (484 aa).

A domain I, interacts with DnaA modulators region spans residues M1 to T73. A domain II region spans residues T73–P140. A domain III, AAA+ region region spans residues F141–I357. Positions 185, 187, 188, and 189 each coordinate ATP. The segment at D358–N484 is domain IV, binds dsDNA.

The protein belongs to the DnaA family. Oligomerizes as a right-handed, spiral filament on DNA at oriC.

It is found in the cytoplasm. Functionally, plays an essential role in the initiation and regulation of chromosomal replication. ATP-DnaA binds to the origin of replication (oriC) to initiate formation of the DNA replication initiation complex once per cell cycle. Binds the DnaA box (a 9 base pair repeat at the origin) and separates the double-stranded (ds)DNA. Forms a right-handed helical filament on oriC DNA; dsDNA binds to the exterior of the filament while single-stranded (ss)DNA is stabiized in the filament's interior. The ATP-DnaA-oriC complex binds and stabilizes one strand of the AT-rich DNA unwinding element (DUE), permitting loading of DNA polymerase. After initiation quickly degrades to an ADP-DnaA complex that is not apt for DNA replication. Binds acidic phospholipids. The sequence is that of Chromosomal replication initiator protein DnaA from Borrelia recurrentis (strain A1).